We begin with the raw amino-acid sequence, 100 residues long: uncharacterized protein (100 aa).

Transmembrane regions (helical) follow at residues 50 to 70 (LLIF…FSLF) and 75 to 95 (DVFL…SPEV).

It is found in the membrane. This is an uncharacterized protein from Saccharomyces cerevisiae (strain ATCC 204508 / S288c) (Baker's yeast).